A 74-amino-acid chain; its full sequence is UPF0346 protein BPUM_1890 (74 aa).

The protein belongs to the UPF0346 family.

The polypeptide is UPF0346 protein BPUM_1890 (Bacillus pumilus (strain SAFR-032)).